The sequence spans 176 residues: Lipoprotein signal peptidase (176 aa).

The next 4 membrane-spanning stretches (helical) occupy residues 26 to 46 (LWLA…IVIV), 57 to 77 (VTGF…SFLA), 82 to 102 (WQRW…VWLL), and 111 to 131 (FCFA…DRVI). Active-site residues include Asp137 and Asp155. The helical transmembrane segment at 147–167 (HWPAFNVADCAITVGAVLLIV) threads the bilayer.

This sequence belongs to the peptidase A8 family.

It localises to the cell inner membrane. It carries out the reaction Release of signal peptides from bacterial membrane prolipoproteins. Hydrolyzes -Xaa-Yaa-Zaa-|-(S,diacylglyceryl)Cys-, in which Xaa is hydrophobic (preferably Leu), and Yaa (Ala or Ser) and Zaa (Gly or Ala) have small, neutral side chains.. Its pathway is protein modification; lipoprotein biosynthesis (signal peptide cleavage). Its function is as follows. This protein specifically catalyzes the removal of signal peptides from prolipoproteins. The chain is Lipoprotein signal peptidase from Cupriavidus taiwanensis (strain DSM 17343 / BCRC 17206 / CCUG 44338 / CIP 107171 / LMG 19424 / R1) (Ralstonia taiwanensis (strain LMG 19424)).